Here is a 617-residue protein sequence, read N- to C-terminus: Protein kinase STUNTED (617 aa).

Residues 162-187 (SSELSEGFSDKDLAKTTGQEKRKISG) are disordered. The segment covering 169 to 184 (FSDKDLAKTTGQEKRK) has biased composition (basic and acidic residues). The Protein kinase domain maps to 277–555 (FSLENLIGKG…RGEDDVSKWV (279 aa)). Residues 283 to 291 (IGKGGCNEV) and K305 each bind ATP. At Y350 the chain carries Phosphotyrosine. Residue D399 is the Proton acceptor of the active site. S403 carries the post-translational modification Phosphoserine. T439 carries the post-translational modification Phosphothreonine. A Phosphotyrosine modification is found at Y447. Residues 590–617 (DSVSNSSLERSNNSLFSSSSSSSQELQS) form a disordered region. Low complexity predominate over residues 591–617 (SVSNSSLERSNNSLFSSSSSSSQELQS).

It belongs to the protein kinase superfamily. Ser/Thr protein kinase family. As to expression, expressed ubiquitously, mostly in roots, to a lower extent in leaves, floral buds and stems, and, at low levels, in flowers and siliques.

Its subcellular location is the cytoplasm. Its function is as follows. Promotes cell proliferation in the gibberellic acid (GA) signaling pathway, acting downstream of RGA, and possibly through a negative regulation of two cyclin-dependent kinase inhibitors SIM and SMR1. In Arabidopsis thaliana (Mouse-ear cress), this protein is Protein kinase STUNTED.